The chain runs to 610 residues: ABC transporter ATP-binding protein ARB1 (610 aa).

The interval 1–43 is disordered; the sequence is MPPVSASKAKRDAKKAEREAKKAAAGKTIRKLGRKKEAAAEES. Residues Ser43 and Ser65 each carry the phosphoserine modification. 2 ABC transporter domains span residues 82 to 323 and 393 to 610; these read IKLS…TNQM and LAFD…NVVL. Residue 114–121 coordinates ATP; sequence GENGCGKS. Ser196 carries the post-translational modification Phosphoserine. 428–435 is a binding site for ATP; that stretch reads GPNGVGKS. The residue at position 446 (Thr446) is a Phosphothreonine.

The protein belongs to the ABC transporter superfamily. ABCF family. EF3 subfamily. In terms of assembly, interacts with LSG1.

It is found in the cytoplasm. It localises to the nucleus. It carries out the reaction ATP + H2O = ADP + phosphate + H(+). Its function is as follows. ATPase that stimulates 40S and 60S ribosome biogenesis. Also involved in ribosome-associated quality control (RQC) pathway, a pathway that mediates ubiquitination and extraction of incompletely synthesized nascent chains for proteasomal degradation: localizes to the ribosomal E-site and stimulates VMS1-dependent tRNA cleavage. The protein is ABC transporter ATP-binding protein ARB1 (ARB1) of Saccharomyces cerevisiae (strain ATCC 204508 / S288c) (Baker's yeast).